The primary structure comprises 1551 residues: Transient receptor potential cation channel subfamily M member-like 2 (1551 aa).

At 1 to 714 (MGKDSFTPLY…WMGTMAMNTR (714 aa)) the chain is on the cytoplasmic side. An intramembrane segment occupies 715-730 (WWKVLVCLYLPVLIFP). Over 731-837 (IIYFVPDEQH…DRIMHFYSAP (107 aa)) the chain is Cytoplasmic. The segment at 744 to 767 (AAEREHQKSLNQKSSKVKSHKEKN) is disordered. A helical transmembrane segment spans residues 838–858 (FSKFVGNVVGYLAFIFLYAYV). Residues 859–877 (VLFNFPRFDPAKTLGGIHP) lie on the Extracellular side of the membrane. A helical transmembrane segment spans residues 878–898 (TEIVLYFWVFTILIEEIRQLA). Residues glutamate 893 and glutamine 896 each coordinate Ca(2+). Residues 899–916 (AKPPKYIKDKVSVYFSDT) lie on the Cytoplasmic side of the membrane. Residues 917–937 (WNFVDIFSLTVFIIAIILRFF) form a helical membrane-spanning segment. 2 residues coordinate Ca(2+): asparagine 918 and aspartate 921. Residues 938-947 (TNSRIFTASR) lie on the Extracellular side of the membrane. A helical transmembrane segment spans residues 948–968 (IILSLDIIFFIVRSLQIFSVN). The Cytoplasmic portion of the chain corresponds to 969–980 (RLLGPKLVMIQK). The helical transmembrane segment at 981 to 1001 (MMQDLAQFIIILAVFTIAYGI) threads the bilayer. Over 1002-1018 (ALHAVMFPSPGIYARNN) the chain is Extracellular. N-linked (GlcNAc...) asparagine glycosylation is present at asparagine 1017. The segment at residues 1019 to 1034 (TWVTITSVVQYPYWQM) is an intramembrane region (pore-forming). The Selectivity filter motif lies at 1035 to 1037 (YGE). The Extracellular segment spans residues 1035 to 1059 (YGELFLDEIQGEKPKEFGEVDPDGR). A Prevents fast channel inactivation motif is present at residues 1040 to 1042 (LDE). Residues 1060 to 1080 (WLSPLLLAIYMVFTNILLLNL) traverse the membrane as a helical segment. Over 1081 to 1116 (LIAIFNYTFERVQEDSDKVWKFQRYDLVQEYHSRPV) the chain is Cytoplasmic. The stretch at 1117-1135 (FAPPLVLLGHILIFIRWVW) is an intramembrane region. Residues 1136-1551 (RMCRCGHPPR…KVAKMRDAAF (416 aa)) are Cytoplasmic-facing. A coiled-coil region spans residues 1184-1209 (LEERVRALGDRVDCINSQLNRVLDSM). The Nudix hydrolase domain maps to 1394–1546 (WKRTSAGVML…VSILEKVAKM (153 aa)). The Nudix box motif lies at 1428-1449 (GMVEPGQLVTQALKAEFGEEAM).

Belongs to the transient receptor (TC 1.A.4) family. LTrpC subfamily. TRPM2 sub-subfamily. Homotetramer.

It is found in the cell membrane. With respect to regulation, activated by phosphatidylinositol 4,5-bisphosphate (PIP2). Although PIP2 is essential for the channel activation, its contribution to the level of channel activity is minimal. Also activated by diphosphate ribose-2'-phosphate. Upon binding to ADPR, channel activation requires only a short initial cytosolic Ca(2+) increase, then the activation is sustained by the uptake of extracellular Ca(2+). Activated by 2-aminoethyl diphenylborinate (2-APB) in a Ca(2+)-dependent manner. 2-APB prevents the inactivation of the channel. Its function is as follows. Nonselective, voltage-independent cation channel that mediates Ca(2+) and to a lesser extent Na(+) influx, leading to increased cytoplasmic Ca(2+) levels. Functions as a ligand-gated ion channel. Binding of ADP-ribose causes a conformation change; the channel is primed but still requires Ca(2+) binding to trigger channel opening. May have ADP-ribose pyrophosphatase activity which reduces ADP-ribose levels induced by oxidative stress, thus preventing the channel activation by reactive oxygen species. This Nematostella vectensis (Starlet sea anemone) protein is Transient receptor potential cation channel subfamily M member-like 2.